The chain runs to 204 residues: HTH-type transcriptional repressor KstR2 (204 aa).

Positions 13–73 (SGRRTELLDI…EILRGFLDDL (61 aa)) constitute an HTH tetR-type domain. A DNA-binding region (H-T-H motif) is located at residues 36 to 55 (TVRDIADAAGILSGSLYHHF).

In terms of assembly, homodimer.

Its function is as follows. Controls the expression of a small regulon that may play a role in the utilization of cholesterol. In Rhodococcus jostii (strain RHA1), this protein is HTH-type transcriptional repressor KstR2 (kstR2).